We begin with the raw amino-acid sequence, 220 residues long: Cell division protein SepF (220 aa).

The interval 33 to 82 is disordered; it reads GAARGYARRPREDRFEEEGYIDRAGREYDDRPAPREYDEPPIYRGGYDEP. Basic and acidic residues predominate over residues 52–70; that stretch reads YIDRAGREYDDRPAPREYD.

It belongs to the SepF family. Homodimer. Interacts with FtsZ.

The protein localises to the cytoplasm. In terms of biological role, cell division protein that is part of the divisome complex and is recruited early to the Z-ring. Probably stimulates Z-ring formation, perhaps through the cross-linking of FtsZ protofilaments. Its function overlaps with FtsA. The sequence is that of Cell division protein SepF from Mycobacterium sp. (strain JLS).